We begin with the raw amino-acid sequence, 421 residues long: Ubiquitin-like modifier-activating enzyme 5 (421 aa).

The ATP site is built by Gly89, Asp110, Lys133, Asn156, and Asn191. Positions 233 and 236 each coordinate Zn(2+). Catalysis depends on Cys257, which acts as the Glycyl thioester intermediate. Residues Cys310 and Cys315 each contribute to the Zn(2+) site.

It belongs to the ubiquitin-activating E1 family. UBA5 subfamily.

E1-like enzyme which activates UFM1. This is Ubiquitin-like modifier-activating enzyme 5 from Oryza sativa subsp. japonica (Rice).